An 864-amino-acid chain; its full sequence is Disintegrin and metalloproteinase domain-containing protein 15 (864 aa).

Residues 1-17 (MRLALLWALGLLGAGSP) form the signal peptide. The interval 17–49 (PRPSPPLPNIGGTEEEQQASPERTQSRSLENQV) is disordered. Positions 18–208 (RPSPPLPNIG…EQHHLRRLKR (191 aa)) are excised as a propeptide. Positions 34 to 49 (QASPERTQSRSLENQV) are enriched in polar residues. N-linked (GlcNAc...) asparagine glycosylation is present at Asn-57. The Cysteine switch signature appears at 178 to 185 (HTCAPSWH). Cys-180 provides a ligand contact to Zn(2+). The Extracellular portion of the chain corresponds to 209–698 (DVVTETKIVE…QLRATSSLTT (490 aa)). Residues 215-416 (KIVELVIVAD…GMGSCLFEWP (202 aa)) form the Peptidase M12B domain. N-linked (GlcNAc...) asparagine glycosylation is present at Asn-239. 4 disulfide bridges follow: Cys-325-Cys-411, Cys-367-Cys-395, Cys-369-Cys-378, and Cys-482-Cys-502. His-350 contacts Zn(2+). The active site involves Glu-351. Zn(2+) contacts are provided by His-354 and His-360. N-linked (GlcNAc...) asparagine glycans are attached at residues Asn-391 and Asn-394. The Disintegrin domain occupies 423-510 (SSLCGNMFVD…QCPPDIRLGD (88 aa)). Asn-608 and Asn-613 each carry an N-linked (GlcNAc...) asparagine glycan. 3 disulfides stabilise this stretch: Cys-659/Cys-669, Cys-663/Cys-675, and Cys-677/Cys-686. The region spanning 659 to 687 (CRSKCHGHGVCDSSRHCHCDEGWAPPDCM) is the EGF-like domain. The chain crosses the membrane as a helical span at residues 699–719 (GLLLSLLLLLVLVLLGASYWY). Tyr-717 and Tyr-737 each carry phosphotyrosine; by HCK and LCK. Residues 720–864 (RARLHQRLCQ…PPPAASSLYL (145 aa)) are Cytoplasmic-facing. Residues 738–864 (RAAQSGPPER…PPPAASSLYL (127 aa)) form a disordered region. The segment covering 753-765 (RAQQMPGTKQANV) has biased composition (polar residues). Pro residues-rich tracts occupy residues 768–780 (PVPP…PNPV) and 810–825 (PQGP…PLPA). Residues 816-822 (PPPPRKP) carry the SH3-binding motif. Residues 826-850 (NPQGRPPLGDLPGPGDGSLQLVVPS) show a composition bias toward low complexity. An SH3-binding motif is present at residues 851-857 (RPAPPPP).

Interacts with ITAGV-ITGB3 (vitronectin receptor). Interacts with SH3GL2 and SNX9; this interaction occurs preferentially with ADAM15 precursor, rather than the processed form, suggesting it occurs in a secretory pathway compartment prior to the medial Golgi. Interacts with ITAG9-ITGB1. Interacts specifically with Src family protein-tyrosine kinases (PTKs). Interacts with SH3PXD2A. Interacts with ITAGV-ITGB1. Interacts with GRB2, HCK, ITSN1, ITSN2, LYN, MAPK1, MAPK3, NCF1, NCK1, nephrocystin, PTK6, SNX33, LCK and SRC. Zn(2+) serves as cofactor. Post-translationally, the precursor is cleaved by a furin endopeptidase. In terms of processing, phosphorylation increases association with PTKs. In terms of tissue distribution, predominantly expressed in brain, spinal cord, sciatic nerve and lung. Expressed at lower levels in all other tissues. In the peripheral nervous system, expressed predominantly by Schwann cells. In the central nervous system, preferentially expressed by neuronal cells.

The protein localises to the endomembrane system. It localises to the cell junction. The protein resides in the adherens junction. It is found in the cell projection. Its subcellular location is the cilium. The protein localises to the flagellum. It localises to the cytoplasmic vesicle. The protein resides in the secretory vesicle. It is found in the acrosome. Functionally, active metalloproteinase with gelatinolytic and collagenolytic activity. Plays a role in the wound healing process. Mediates both heterotypic intraepithelial cell/T-cell interactions and homotypic T-cell aggregation. Inhibits beta-1 integrin-mediated cell adhesion and migration of airway smooth muscle cells. Suppresses cell motility on or towards fibronectin possibly by driving alpha-v/beta-1 integrin (ITAGV-ITGB1) cell surface expression via ERK1/2 inactivation. Cleaves E-cadherin in response to growth factor deprivation. Plays a role in glomerular cell migration. Plays a role in pathological neovascularization. May play a role in cartilage remodeling. May be proteolytically processed, during sperm epididymal maturation and the acrosome reaction. May play a role in sperm-egg binding through its disintegrin domain. The polypeptide is Disintegrin and metalloproteinase domain-containing protein 15 (Adam15) (Rattus norvegicus (Rat)).